The sequence spans 490 residues: Protein lag-3 (490 aa).

Disordered regions lie at residues P18–P55, E105–E155, S213–E235, S307–I362, and Q391–N490. The span at E105 to E119 shows a compositional bias: basic and acidic residues. Positions N122 to V138 are enriched in polar residues. Over residues S307–M318 the composition is skewed to polar residues. Composition is skewed to low complexity over residues Q341–M359, Q391–M404, and Q413–M456.

Component of a complex consisting of at least a lin-12/Notch intracellular domain (NICD), lag-1, and lag-3. Interacts with a NICD of lin-12/Notch or glp-1/Notch; the interactions are direct. As to expression, expressed in the progenitor zone and the early pachytene region of the hermaphrodite gonad.

The protein localises to the nucleus. Its function is as follows. glp-1/Notch and lin-12/Notch proteins promote signaling by recruiting lag-3 to target promoters, where it functions as a transcriptional activator, probably as part of a complex with a Notch intracellular domain (NICD) and the transcription regulator lag-1. Involved in the p53-mediated germ-cell apoptotic response to DNA damage, perhaps acting as a transcriptional activator. May regulate phosphatase lip-1 mRNA transcription downstream of glp-1. This chain is Protein lag-3 (sel-8), found in Caenorhabditis elegans.